Here is a 178-residue protein sequence, read N- to C-terminus: DELTA-miturgitoxin-Cp3a (178 aa).

The signal sequence occupies residues 1 to 18 (MKALYLLGLLAFLYSCSS). The propeptide occupies 19-46 (ENVYDLQPESSEEENPGTFLEAIQEQSR). The short motif at 43-46 (EQSR) is the Processing quadruplet motif element. Intrachain disulfides connect C48–C63, C55–C72, C62–C86, C74–C84, C113–C128, C120–C137, C127–C155, and C139–C153.

It belongs to the spider toxin CSTX family. Double-CSTX subfamily. In terms of processing, cleavage of the propeptide depends on the processing quadruplet motif (XXXR, with at least one of X being E). As to expression, expressed by the venom gland.

The protein resides in the secreted. Spider venom toxin that exhibits cytolytic activity by forming an alpha-helix across the membrane. Lethal to insect larvae. This chain is DELTA-miturgitoxin-Cp3a, found in Cheiracanthium punctorium (Yellow sac spider).